The sequence spans 588 residues: MAAHDDDMNRGIRPGRGSDDPAGQIAYLEQEIAVLRRKLADSPRHTRILEERIVELQTNLAGVSAQNERLANTLREARDQIVALKEEVDRLAQPPAGFGVFLTANEDGTADIFTGGRKLRVNVSPSVELEELRRGQELMLNEALNVVEAMEYESVGDIVTLKEILEDGERALVVGHTDEERVVRLAEPLLDVTIRPGDALLLEPRSGYVYEVVPKSEVEELVLEEVPDIGYEQIGGLGNQIEMIRDAVELPYLYPDLFKEHELRPPKGVLLYGPPGCGKTLIAKAVANSLAKKVAEVTGQATGKSFFLNIKGPELLNKYVGETERQIRLVFQRAREKASEGTPVIVFFDEMESLFRTRGSGVSSDVENTIVPQLLAEIDGVEGLQNVVVIGASNREDMIDPAILRPGRLDVKIKIERPDAEAAKDIFGKYLTERLPLHTEDVGEHGGDRSATVHGMIQTAVEQMYAESEENRFLEVTYANGDKEVLYFKDFNSGAMIENIVGRAKKMAIKDFLEHSQKGLRVSHLLQACVDEFKENEDLPNTTNPDDWARISGKKGERIVYIRTLITGKQGADTGRSIDTVANTGQYL.

The span at 1–10 shows a compositional bias: basic and acidic residues; it reads MAAHDDDMNR. Residues 1-23 are disordered; the sequence is MAAHDDDMNRGIRPGRGSDDPAG. Residues 47-94 are a coiled coil; it reads RILEERIVELQTNLAGVSAQNERLANTLREARDQIVALKEEVDRLAQP. 276-281 provides a ligand contact to ATP; it reads GCGKTL. The docks into pockets in the proteasome alpha-ring stretch occupies residues 587–588; it reads YL.

The protein belongs to the AAA ATPase family. As to quaternary structure, homohexamer. Assembles into a hexameric ring structure that caps the 20S proteasome core. Strongly interacts with the prokaryotic ubiquitin-like protein Pup through a hydrophobic interface; the interacting region of ARC lies in its N-terminal coiled-coil domain. There is one Pup binding site per ARC hexamer ring. Upon ATP-binding, the C-terminus of ARC interacts with the alpha-rings of the proteasome core, possibly by binding to the intersubunit pockets.

The protein operates within protein degradation; proteasomal Pup-dependent pathway. Functionally, ATPase which is responsible for recognizing, binding, unfolding and translocation of pupylated proteins into the bacterial 20S proteasome core particle. May be essential for opening the gate of the 20S proteasome via an interaction with its C-terminus, thereby allowing substrate entry and access to the site of proteolysis. Thus, the C-termini of the proteasomal ATPase may function like a 'key in a lock' to induce gate opening and therefore regulate proteolysis. The chain is Proteasome-associated ATPase from Streptomyces avermitilis (strain ATCC 31267 / DSM 46492 / JCM 5070 / NBRC 14893 / NCIMB 12804 / NRRL 8165 / MA-4680).